The following is a 221-amino-acid chain: Protein-L-isoaspartate O-methyltransferase (221 aa).

The active site involves Ser64.

This sequence belongs to the methyltransferase superfamily. L-isoaspartyl/D-aspartyl protein methyltransferase family.

The protein localises to the cytoplasm. The catalysed reaction is [protein]-L-isoaspartate + S-adenosyl-L-methionine = [protein]-L-isoaspartate alpha-methyl ester + S-adenosyl-L-homocysteine. Its function is as follows. Catalyzes the methyl esterification of L-isoaspartyl residues in peptides and proteins that result from spontaneous decomposition of normal L-aspartyl and L-asparaginyl residues. It plays a role in the repair and/or degradation of damaged proteins. The sequence is that of Protein-L-isoaspartate O-methyltransferase from Cytophaga hutchinsonii (strain ATCC 33406 / DSM 1761 / CIP 103989 / NBRC 15051 / NCIMB 9469 / D465).